The primary structure comprises 63 residues: DNA-directed RNA polymerase 7 kDa subunit (63 aa).

Belongs to the poxviridae DNA-directed RNA polymerase 7 kDa subunit family. In terms of assembly, the DNA-dependent RNA polymerase used for intermediate and late genes expression consists of eight subunits 147 kDa, 133 kDa, 35 kDa, 30 kDa, 22 kDa, 19 kDa, 18 kDa and 7 kDa totalling more than 500 kDa in mass. The same holoenzyme, with the addition of the transcription-specificity factor RAP94, is used for early gene expression.

Its subcellular location is the virion. The enzyme catalyses RNA(n) + a ribonucleoside 5'-triphosphate = RNA(n+1) + diphosphate. Functionally, part of the DNA-dependent RNA polymerase which catalyzes the transcription of viral DNA into RNA using the four ribonucleoside triphosphates as substrates. Responsible for the transcription of early, intermediate and late genes. DNA-dependent RNA polymerase associates with the early transcription factor (ETF) thereby allowing the early genes transcription. Late transcription, and probably also intermediate transcription, require newly synthesized RNA polymerase. The polypeptide is DNA-directed RNA polymerase 7 kDa subunit (RPO7) (Fowlpox virus (strain NVSL) (FPV)).